Consider the following 440-residue polypeptide: Thymidine phosphorylase (440 aa).

It belongs to the thymidine/pyrimidine-nucleoside phosphorylase family. In terms of assembly, homodimer.

The catalysed reaction is thymidine + phosphate = 2-deoxy-alpha-D-ribose 1-phosphate + thymine. The protein operates within pyrimidine metabolism; dTMP biosynthesis via salvage pathway; dTMP from thymine: step 1/2. Functionally, the enzymes which catalyze the reversible phosphorolysis of pyrimidine nucleosides are involved in the degradation of these compounds and in their utilization as carbon and energy sources, or in the rescue of pyrimidine bases for nucleotide synthesis. The chain is Thymidine phosphorylase from Salmonella choleraesuis (strain SC-B67).